A 521-amino-acid polypeptide reads, in one-letter code: Zinc finger protein GLIS2 (521 aa).

Residues 35 to 174 are interaction with CTNND1; the sequence is ALHRELGLVD…AKQLVCRWAK (140 aa). 2 disordered regions span residues 41–63 and 84–110; these read GLVD…LLNP and SPPS…DLPP. Residues 49-58 show a composition bias toward pro residues; the sequence is PGSPGSPPPG. The transcription activation stretch occupies residues 71–137; sequence GRFSAAPLVD…SSFQFFLPLG (67 aa). Residues 84–100 are compositionally biased toward low complexity; that stretch reads SPPSGLDSPNGSSSLSP. The tract at residues 148 to 171 is transcription repression; the sequence is SFLPPPKDKCLSPELPLAKQLVCR. The C2H2-type 1 zinc-finger motif lies at 168-193; sequence LVCRWAKCNQLFELLQDLVDHVNDHH. A C2H2-type 2; atypical zinc finger spans residues 202-229; sequence YCCHWEGCARHGRGFNARYKMLIHIRTH. 3 C2H2-type zinc fingers span residues 235-257, 263-287, and 293-317; these read HRCP…NRSH, YVCP…TRTH, and YYCK…IKAH. The tract at residues 436–501 is disordered; sequence AGSKAEGEKG…NSAASSPEVL (66 aa). The segment covering 455 to 470 has biased composition (basic and acidic residues); the sequence is GLEDHKTPLERTERSR. Polar residues predominate over residues 487-496; sequence DLSTGNSAAS.

It belongs to the GLI C2H2-type zinc-finger protein family. As to quaternary structure, interacts with CTBP1 and HDAC3. Interacts with CTNNB1 and CTNND1. Interacts with SUFU. In terms of processing, C-terminus cleavage is induced by interaction with CTNND1 and enhances by Src tyrosine kinase. Expressed at high levels in kidney, and at lower levels in heart and lung.

The protein localises to the nucleus speckle. The protein resides in the cytoplasm. Functionally, can act either as a transcriptional repressor or as a transcriptional activator, depending on the cell context. Acts as a repressor of the Hedgehog signaling pathway. Represses the Hedgehog-dependent expression of Wnt4. Necessary to maintain the differentiated epithelial phenotype in renal cells through the inhibition of SNAI1, which itself induces the epithelial-to-mesenchymal transition. Represses transcriptional activation by CTNNB1 in the Wnt signaling pathway. May act by recruiting the corepressors CTBP1 and HDAC3. May be involved in neuron differentiation. This chain is Zinc finger protein GLIS2 (Glis2), found in Mus musculus (Mouse).